Consider the following 280-residue polypeptide: Diaminopimelate epimerase (280 aa).

Asparagine 13 and asparagine 66 together coordinate substrate. Catalysis depends on cysteine 75, which acts as the Proton donor. Residues 76–77 (GN), asparagine 162, asparagine 195, and 213–214 (ER) contribute to the substrate site. Residue cysteine 222 is the Proton acceptor of the active site. 223-224 (GT) serves as a coordination point for substrate.

The protein belongs to the diaminopimelate epimerase family. Homodimer.

The protein localises to the cytoplasm. The catalysed reaction is (2S,6S)-2,6-diaminopimelate = meso-2,6-diaminopimelate. The protein operates within amino-acid biosynthesis; L-lysine biosynthesis via DAP pathway; DL-2,6-diaminopimelate from LL-2,6-diaminopimelate: step 1/1. Its function is as follows. Catalyzes the stereoinversion of LL-2,6-diaminopimelate (L,L-DAP) to meso-diaminopimelate (meso-DAP), a precursor of L-lysine and an essential component of the bacterial peptidoglycan. This Synechococcus elongatus (strain ATCC 33912 / PCC 7942 / FACHB-805) (Anacystis nidulans R2) protein is Diaminopimelate epimerase.